We begin with the raw amino-acid sequence, 221 residues long: Molybdenum cofactor guanylyltransferase (221 aa).

Residues 18-20, K35, N63, D81, and D112 each bind GTP; that span reads IAG. D112 contributes to the Mg(2+) binding site.

Belongs to the MobA family. As to quaternary structure, monomer. It depends on Mg(2+) as a cofactor.

Its subcellular location is the cytoplasm. It carries out the reaction Mo-molybdopterin + GTP + H(+) = Mo-molybdopterin guanine dinucleotide + diphosphate. Functionally, transfers a GMP moiety from GTP to Mo-molybdopterin (Mo-MPT) cofactor (Moco or molybdenum cofactor) to form Mo-molybdopterin guanine dinucleotide (Mo-MGD) cofactor. The protein is Molybdenum cofactor guanylyltransferase of Brucella melitensis biotype 2 (strain ATCC 23457).